An 833-amino-acid polypeptide reads, in one-letter code: Leucine--tRNA ligase (833 aa).

The 'HIGH' region signature appears at 41-52 (PYPSGAGLHVGH). Residues 610-614 (KMSKS) carry the 'KMSKS' region motif. Lysine 613 contacts ATP.

This sequence belongs to the class-I aminoacyl-tRNA synthetase family.

It is found in the cytoplasm. It carries out the reaction tRNA(Leu) + L-leucine + ATP = L-leucyl-tRNA(Leu) + AMP + diphosphate. The polypeptide is Leucine--tRNA ligase (Streptococcus pyogenes serotype M12 (strain MGAS2096)).